Consider the following 338-residue polypeptide: Aspartate-semialdehyde dehydrogenase (338 aa).

NADP(+)-binding positions include Thr-9–Val-12 and Arg-37–Ser-38. Arg-93 serves as a coordination point for phosphate. The active-site Acyl-thioester intermediate is the Cys-123. Gln-150 provides a ligand contact to substrate. Ser-153–Gly-154 lines the NADP(+) pocket. Residue Lys-220 participates in phosphate binding. Arg-242 is a binding site for substrate. The Proton acceptor role is filled by His-249. An NADP(+)-binding site is contributed by Asn-316.

It belongs to the aspartate-semialdehyde dehydrogenase family. In terms of assembly, homodimer.

The catalysed reaction is L-aspartate 4-semialdehyde + phosphate + NADP(+) = 4-phospho-L-aspartate + NADPH + H(+). It participates in amino-acid biosynthesis; L-lysine biosynthesis via DAP pathway; (S)-tetrahydrodipicolinate from L-aspartate: step 2/4. The protein operates within amino-acid biosynthesis; L-methionine biosynthesis via de novo pathway; L-homoserine from L-aspartate: step 2/3. It functions in the pathway amino-acid biosynthesis; L-threonine biosynthesis; L-threonine from L-aspartate: step 2/5. Its function is as follows. Catalyzes the NADPH-dependent formation of L-aspartate-semialdehyde (L-ASA) by the reductive dephosphorylation of L-aspartyl-4-phosphate. This is Aspartate-semialdehyde dehydrogenase from Streptomyces akiyoshiensis.